Here is a 688-residue protein sequence, read N- to C-terminus: Glycine--tRNA ligase beta subunit (688 aa).

Belongs to the class-II aminoacyl-tRNA synthetase family. As to quaternary structure, tetramer of two alpha and two beta subunits.

The protein localises to the cytoplasm. The enzyme catalyses tRNA(Gly) + glycine + ATP = glycyl-tRNA(Gly) + AMP + diphosphate. The protein is Glycine--tRNA ligase beta subunit of Aliivibrio fischeri (strain MJ11) (Vibrio fischeri).